A 1370-amino-acid polypeptide reads, in one-letter code: DNA-directed RNA polymerase subunit beta (1370 aa).

Belongs to the RNA polymerase beta chain family. The RNAP catalytic core consists of 2 alpha, 1 beta, 1 beta' and 1 omega subunit. When a sigma factor is associated with the core the holoenzyme is formed, which can initiate transcription.

The enzyme catalyses RNA(n) + a ribonucleoside 5'-triphosphate = RNA(n+1) + diphosphate. Its function is as follows. DNA-dependent RNA polymerase catalyzes the transcription of DNA into RNA using the four ribonucleoside triphosphates as substrates. In Polaromonas naphthalenivorans (strain CJ2), this protein is DNA-directed RNA polymerase subunit beta.